Consider the following 379-residue polypeptide: Guanine nucleotide-binding protein G(s) subunit alpha (379 aa).

Positions 38-379 (STHRLLLLGA…RMHLRQYELL (342 aa)) constitute a G-alpha domain. The G1 motif stretch occupies residues 41-54 (RLLLLGAGESGKST). Residues 46-53 (GAGESGKS), 182-188 (LRCRVLT), 207-211 (DVGGQ), 276-279 (NKQD), and A351 each bind GTP. The Mg(2+) site is built by S53 and T188. The tract at residues 180 to 188 (DILRCRVLT) is G2 motif. Residues 203–212 (FHMFDVGGQR) form a G3 motif region. Positions 272-279 (ILFLNKQD) are G4 motif. The segment at 349 to 354 (TCAVDT) is G5 motif.

This sequence belongs to the G-alpha family. G(s) subfamily. G proteins are composed of 3 units; alpha, beta and gamma. The alpha chain contains the guanine nucleotide binding site.

Its function is as follows. Guanine nucleotide-binding proteins (G proteins) are involved as modulators or transducers in various transmembrane signaling systems. The G(s) protein is involved in hormonal regulation of adenylate cyclase: it activates the cyclase in response to beta-adrenergic stimuli. The protein is Guanine nucleotide-binding protein G(s) subunit alpha of Schistosoma mansoni (Blood fluke).